A 322-amino-acid chain; its full sequence is Serine protease 38 (322 aa).

An N-terminal signal peptide occupies residues 1–28 (MAALTSGLGVLGYLLFPLLLASPTWVTS). A propeptide spans 29 to 55 (VSRRHPKSQANSLSGDVACGQPVLQGK) (activation peptide). Positions 56-289 (LLGGEFARDR…FLSWIRYHLQ (234 aa)) constitute a Peptidase S1 domain. A disulfide bridge links C81 with C97. Catalysis depends on charge relay system residues H96 and D146. N176 carries an N-linked (GlcNAc...) asparagine glycan. 3 disulfide bridges follow: C179–C247, C210–C226, and C237–C265. S241 serves as the catalytic Charge relay system. N-linked (GlcNAc...) asparagine glycosylation is found at N250 and N276.

The protein belongs to the peptidase S1 family.

Its subcellular location is the secreted. In Mus musculus (Mouse), this protein is Serine protease 38 (Prss38).